The following is a 322-amino-acid chain: Beta-ketoacyl-[acyl-carrier-protein] synthase III (322 aa).

Active-site residues include Cys-113 and His-249. The segment at 250-254 (QANVR) is ACP-binding. The active site involves Asn-279.

It belongs to the thiolase-like superfamily. FabH family. In terms of assembly, homodimer.

It is found in the cytoplasm. It carries out the reaction malonyl-[ACP] + acetyl-CoA + H(+) = 3-oxobutanoyl-[ACP] + CO2 + CoA. It participates in lipid metabolism; fatty acid biosynthesis. In terms of biological role, catalyzes the condensation reaction of fatty acid synthesis by the addition to an acyl acceptor of two carbons from malonyl-ACP. Catalyzes the first condensation reaction which initiates fatty acid synthesis and may therefore play a role in governing the total rate of fatty acid production. Possesses both acetoacetyl-ACP synthase and acetyl transacylase activities. Its substrate specificity determines the biosynthesis of branched-chain and/or straight-chain of fatty acids. The sequence is that of Beta-ketoacyl-[acyl-carrier-protein] synthase III from Anaplasma marginale (strain St. Maries).